A 444-amino-acid polypeptide reads, in one-letter code: Ribosomal protein uS12 methylthiotransferase RimO (444 aa).

One can recognise an MTTase N-terminal domain in the interval 2 to 118 (LKIALESLGC…IDKILKELSE (117 aa)). [4Fe-4S] cluster-binding residues include Cys11, Cys47, Cys81, Cys155, Cys159, and Cys162. In terms of domain architecture, Radical SAM core spans 141–371 (STPSYMAYLK…MMIQQKISEE (231 aa)). Residues 374–441 (DKKIGKTYEV…EYDLMGDVLY (68 aa)) form the TRAM domain.

The protein belongs to the methylthiotransferase family. RimO subfamily. [4Fe-4S] cluster serves as cofactor.

The protein resides in the cytoplasm. It catalyses the reaction L-aspartate(89)-[ribosomal protein uS12]-hydrogen + (sulfur carrier)-SH + AH2 + 2 S-adenosyl-L-methionine = 3-methylsulfanyl-L-aspartate(89)-[ribosomal protein uS12]-hydrogen + (sulfur carrier)-H + 5'-deoxyadenosine + L-methionine + A + S-adenosyl-L-homocysteine + 2 H(+). Its function is as follows. Catalyzes the methylthiolation of an aspartic acid residue of ribosomal protein uS12. This chain is Ribosomal protein uS12 methylthiotransferase RimO, found in Clostridioides difficile (strain 630) (Peptoclostridium difficile).